Consider the following 441-residue polypeptide: Actin-related protein 4 (441 aa).

A disordered region spans residues 48 to 73; that stretch reads VDVDSTKTNSNSEDSKTESEKEKSKR. Positions 60 to 70 are enriched in basic and acidic residues; sequence EDSKTESEKEK.

Belongs to the actin family. ARP4 subfamily. Component of the SWR1 chromatin-remodeling complex and of the NuA4 histone acetyltransferase complex. Interacts with the SWI/SNF complex. Interacts with EAF1A and EAF1B. As to expression, mostly expressed in flowers, and, to a lower extent, in roots, seedlings, leaves and siliques (at protein level).

Its subcellular location is the nucleus. It localises to the cytoplasm. In terms of biological role, involved in several developmental processes including organization of plant organs, flowering time, anther development, flower senescence and fertility, probably by regulating the chromatin structure. The chain is Actin-related protein 4 from Arabidopsis thaliana (Mouse-ear cress).